The following is a 1091-amino-acid chain: Sodium/potassium exporting P-type ATPase 5 (1091 aa).

The Cytoplasmic portion of the chain corresponds to 1 to 63; the sequence is MSEGTVKENN…LGDDTKIDYK (63 aa). Residues 64 to 84 form a helical membrane-spanning segment; the sequence is AMVLHQVCNAMIMVLVISMAI. At 85 to 90 the chain is on the extracellular side; that stretch reads SFAVRD. The chain crosses the membrane as a helical span at residues 91 to 111; the sequence is WITGGVISFVIAVNVLIGLVQ. The Cytoplasmic portion of the chain corresponds to 112–282; that stretch reads EYKATKTMNS…TNVGTPLHRK (171 aa). A helical transmembrane segment spans residues 283-303; sequence LSKLAVLLFWIAVLFAIIVMA. Topologically, residues 304–312 are extracellular; it reads SQKFDVDKR. The chain crosses the membrane as a helical span at residues 313-333; sequence VAIYAICVALSMIPSSLVVVL. Residues 334-815 are Cytoplasmic-facing; it reads TITMSVGAAV…RRMTDNIQKF (482 aa). Aspartate 369 acts as the 4-aspartylphosphate intermediate in catalysis. Mg(2+)-binding residues include aspartate 369 and threonine 371. ATP-binding residues include threonine 371 and glutamate 483. The disordered stretch occupies residues 499-525; the sequence is ALTGEKSTNQSNENDQSSLSQHNEKPG. The span at 503–519 shows a compositional bias: polar residues; it reads EKSTNQSNENDQSSLSQ. Positions 561, 606, 673, 674, 675, 732, and 738 each coordinate ATP. A Mg(2+)-binding site is contributed by aspartate 757. Position 760 (asparagine 760) interacts with ATP. A helical membrane pass occupies residues 816-836; it reads VLQLLAENVAQALYLIIGLVF. The Extracellular segment spans residues 837 to 848; the sequence is RDENGKSVFPLS. The chain crosses the membrane as a helical span at residues 849 to 869; the sequence is PVEVLWIIVVTSCFPAMGLGL. Over 870–885 the chain is Cytoplasmic; sequence EKAAPDLMDRPPNDSE. The chain crosses the membrane as a helical span at residues 886–906; sequence VGIFTWEVIIDTFAYGIIMTG. Residues 907-943 are Extracellular-facing; the sequence is SCMASFTGSLYGINSGRLGHDCDGTYNSSCRDVYRSR. The helical transmembrane segment at 944–964 threads the bilayer; that stretch reads SAAFATMTWCALILAWEVVDM. Topologically, residues 965 to 991 are cytoplasmic; sequence RRSFFRMHPDTDSPVKEFFRSIWGNQF. Residues 992-1012 form a helical membrane-spanning segment; sequence LFWSIIFGFVSAFPVVYIPVI. Topologically, residues 1013–1021 are extracellular; sequence NDKVFLHKP. The chain crosses the membrane as a helical span at residues 1022–1042; sequence IGAEWGLAIAFTIAFWIGAEL. The Cytoplasmic portion of the chain corresponds to 1043 to 1091; that stretch reads YKCGKRRYFKTQRAHNSENDLERSSKHDPFEAYSTSTTLQSEINISVKH.

Belongs to the cation transport ATPase (P-type) (TC 3.A.3) family. Type IID subfamily. Requires Mg(2+) as cofactor. In terms of processing, the active site is phosphorylated in presence of sodium or potassium and in conditions of higher pH. Not phosphorylated in presence of calcium ions.

It localises to the cell membrane. It carries out the reaction Na(+)(in) + ATP + H2O = Na(+)(out) + ADP + phosphate + H(+). It catalyses the reaction K(+)(in) + ATP + H2O = K(+)(out) + ADP + phosphate + H(+). Functionally, catalyzes the hydrolysis of ATP coupled with the export of sodium and potassium from the cell. May export potassium less efficiently. May transport other cations such as lithium. Sodium/potassium efflux ATPases are involved in salt tolerance and maintaining the membrane potential across the plasma membrane in high salinity (Na+) or alkaline (K+) environments. The protein is Sodium/potassium exporting P-type ATPase 5 of Saccharomyces cerevisiae (strain ATCC 204508 / S288c) (Baker's yeast).